A 622-amino-acid polypeptide reads, in one-letter code: Low affinity potassium transport system protein Kup (622 aa).

12 helical membrane passes run 9–29, 49–69, 101–121, 137–157, 163–183, 213–233, 247–267, 276–296, 337–357, 363–383, 395–415, and 419–439; these read LPAL…TSPL, VFGF…IKYI, VLVI…VITP, PQLD…LFVI, GMVG…LAVL, VSFI…ALYA, WFSV…ALLL, PFFL…ATLA, IYIP…IVSF, LAAA…ILSA, LFVG…FSAN, and IVSG…VMTT.

Belongs to the HAK/KUP transporter (TC 2.A.72) family.

It is found in the cell inner membrane. The enzyme catalyses K(+)(in) + H(+)(in) = K(+)(out) + H(+)(out). In terms of biological role, responsible for the low-affinity transport of potassium into the cell. Likely operates as a K(+):H(+) symporter. The sequence is that of Low affinity potassium transport system protein Kup from Klebsiella pneumoniae subsp. pneumoniae (strain ATCC 700721 / MGH 78578).